Reading from the N-terminus, the 120-residue chain is Ribosome-binding factor A (120 aa).

Belongs to the RbfA family. Monomer. Binds 30S ribosomal subunits, but not 50S ribosomal subunits or 70S ribosomes.

It is found in the cytoplasm. Its function is as follows. One of several proteins that assist in the late maturation steps of the functional core of the 30S ribosomal subunit. Associates with free 30S ribosomal subunits (but not with 30S subunits that are part of 70S ribosomes or polysomes). Required for efficient processing of 16S rRNA. May interact with the 5'-terminal helix region of 16S rRNA. In Borrelia garinii subsp. bavariensis (strain ATCC BAA-2496 / DSM 23469 / PBi) (Borreliella bavariensis), this protein is Ribosome-binding factor A.